The primary structure comprises 362 residues: Small ribosomal subunit protein uS4m (362 aa).

The region spanning threonine 105–isoleucine 179 is the S4 RNA-binding domain.

It belongs to the universal ribosomal protein uS4 family. As to quaternary structure, component of the mitochondrial ribosome small subunit.

It localises to the mitochondrion. This is Small ribosomal subunit protein uS4m (RPS4) from Arabidopsis thaliana (Mouse-ear cress).